A 374-amino-acid polypeptide reads, in one-letter code: Homoserine O-acetyltransferase (374 aa).

The AB hydrolase-1 domain occupies 45–353; the sequence is NAILVLHALT…PYGHDAFLIE (309 aa). The active-site Nucleophile is Ser151. A substrate-binding site is contributed by Arg220. Active-site residues include Asp314 and His347. Residue Asp348 coordinates substrate.

This sequence belongs to the AB hydrolase superfamily. MetX family. As to quaternary structure, homodimer.

It localises to the cytoplasm. The enzyme catalyses L-homoserine + acetyl-CoA = O-acetyl-L-homoserine + CoA. It participates in amino-acid biosynthesis; L-methionine biosynthesis via de novo pathway; O-acetyl-L-homoserine from L-homoserine: step 1/1. In terms of biological role, transfers an acetyl group from acetyl-CoA to L-homoserine, forming acetyl-L-homoserine. The sequence is that of Homoserine O-acetyltransferase from Moorella thermoacetica (strain ATCC 39073 / JCM 9320).